A 334-amino-acid polypeptide reads, in one-letter code: GTPase Obg (334 aa).

The Obg domain occupies 1-159 (MKFIDQAIIH…RDIQLELMLL (159 aa)). The interval 67-86 (AQNGQNGSSRKSSGKKGDDI) is disordered. Positions 68–77 (QNGQNGSSRK) are enriched in low complexity. Residues 160–333 (ADVGTLGMPN…LCSDITKYLK (174 aa)) form the OBG-type G domain. GTP-binding positions include 166–173 (GMPNVGKS), 191–195 (FTTLH), 213–216 (DIPG), 283–286 (NKID), and 314–316 (SSM). The Mg(2+) site is built by serine 173 and threonine 193.

This sequence belongs to the TRAFAC class OBG-HflX-like GTPase superfamily. OBG GTPase family. In terms of assembly, monomer. Requires Mg(2+) as cofactor.

The protein resides in the cytoplasm. Its function is as follows. An essential GTPase which binds GTP, GDP and possibly (p)ppGpp with moderate affinity, with high nucleotide exchange rates and a fairly low GTP hydrolysis rate. Plays a role in control of the cell cycle, stress response, ribosome biogenesis and in those bacteria that undergo differentiation, in morphogenesis control. The chain is GTPase Obg from Buchnera aphidicola subsp. Acyrthosiphon pisum (strain 5A).